A 635-amino-acid chain; its full sequence is Cationic amino acid transporter 4 (635 aa).

Helical transmembrane passes span 42–62, 66–86, and 113–133; these read LTLLGVGGMVGSGLYVLTGAV, VAGPAVLLSFGVAAVASLLAA, and LWAFLIGWNVLLEYIIGGAAV. Residues asparagine 151 and asparagine 195 are each glycosylated (N-linked (GlcNAc...) asparagine). A helical membrane pass occupies residues 197–217; sequence TFSAISLLVILFIVILGFILA. N-linked (GlcNAc...) asparagine glycosylation is present at asparagine 221. A run of 5 helical transmembrane segments spans residues 229-249, 270-290, 318-338, 365-385, and 391-411; these read FAPFGFSGVMAGTASCFYAFV, LAIAISLAIAAGAYILVSTVL, GFIVAAGSICAMNTVLLSLLF, QVPVAGTLAFGLLTAFLALLL, and VQFLSLGTLLAYTFVATSIIV. Phosphoserine is present on residues serine 422 and serine 427. Residues 478-498 traverse the membrane as a helical segment; the sequence is VTWALGVMLASAITIGCVLVF. N-linked (GlcNAc...) asparagine glycosylation occurs at asparagine 500. 3 consecutive transmembrane segments (helical) span residues 508–528, 539–559, and 567–587; these read WGYILLLLLTSVMFLLSLLVL, LFQIPMVPLIPALSIVLNICL, and TWVRFSIWLLMGLAVYFGYGI. An N-linked (GlcNAc...) asparagine glycan is attached at asparagine 601.

The protein belongs to the amino acid-polyamine-organocation (APC) superfamily. Cationic amino acid transporter (CAT) (TC 2.A.3.3) family.

The protein resides in the membrane. In terms of biological role, involved in the transport of the cationic amino acids (arginine, lysine and ornithine). The protein is Cationic amino acid transporter 4 (SLC7A4) of Homo sapiens (Human).